The chain runs to 373 residues: 4-hydroxy-3-methylbut-2-en-1-yl diphosphate synthase (flavodoxin) (373 aa).

Cysteine 270, cysteine 273, cysteine 305, and glutamate 312 together coordinate [4Fe-4S] cluster.

This sequence belongs to the IspG family. Requires [4Fe-4S] cluster as cofactor.

It carries out the reaction (2E)-4-hydroxy-3-methylbut-2-enyl diphosphate + oxidized [flavodoxin] + H2O + 2 H(+) = 2-C-methyl-D-erythritol 2,4-cyclic diphosphate + reduced [flavodoxin]. Its pathway is isoprenoid biosynthesis; isopentenyl diphosphate biosynthesis via DXP pathway; isopentenyl diphosphate from 1-deoxy-D-xylulose 5-phosphate: step 5/6. Its function is as follows. Converts 2C-methyl-D-erythritol 2,4-cyclodiphosphate (ME-2,4cPP) into 1-hydroxy-2-methyl-2-(E)-butenyl 4-diphosphate. The polypeptide is 4-hydroxy-3-methylbut-2-en-1-yl diphosphate synthase (flavodoxin) (Vibrio atlanticus (strain LGP32) (Vibrio splendidus (strain Mel32))).